The following is a 356-amino-acid chain: Heat-inducible transcription repressor HrcA (356 aa).

Belongs to the HrcA family.

Negative regulator of class I heat shock genes (grpE-dnaK-dnaJ and groELS operons). Prevents heat-shock induction of these operons. This is Heat-inducible transcription repressor HrcA from Bartonella henselae (strain ATCC 49882 / DSM 28221 / CCUG 30454 / Houston 1) (Rochalimaea henselae).